The chain runs to 140 residues: Probable transport accessory protein MmpS4 (140 aa).

Residues 2 to 22 (LMRTWIPLVILVVVIVGGFTV) form a helical membrane-spanning segment.

Belongs to the MmpS family.

It is found in the cell membrane. The protein is Probable transport accessory protein MmpS4 (mmpS4) of Mycobacterium bovis (strain ATCC BAA-935 / AF2122/97).